Reading from the N-terminus, the 26-residue chain is Phospholipase A2 homolog A1 (26 aa).

Post-translationally, contains 7 disulfide bonds. Expressed by the venom gland.

It localises to the secreted. This chain is Phospholipase A2 homolog A1, found in Micrurus pyrrhocryptus (Coral snake).